The primary structure comprises 167 residues: Crossover junction endodeoxyribonuclease RuvC (167 aa).

Residues Asp-7, Glu-67, and Asp-140 contribute to the active site. Mg(2+) contacts are provided by Asp-7, Glu-67, and Asp-140.

The protein belongs to the RuvC family. As to quaternary structure, homodimer which binds Holliday junction (HJ) DNA. The HJ becomes 2-fold symmetrical on binding to RuvC with unstacked arms; it has a different conformation from HJ DNA in complex with RuvA. In the full resolvosome a probable DNA-RuvA(4)-RuvB(12)-RuvC(2) complex forms which resolves the HJ. It depends on Mg(2+) as a cofactor.

It is found in the cytoplasm. The enzyme catalyses Endonucleolytic cleavage at a junction such as a reciprocal single-stranded crossover between two homologous DNA duplexes (Holliday junction).. In terms of biological role, the RuvA-RuvB-RuvC complex processes Holliday junction (HJ) DNA during genetic recombination and DNA repair. Endonuclease that resolves HJ intermediates. Cleaves cruciform DNA by making single-stranded nicks across the HJ at symmetrical positions within the homologous arms, yielding a 5'-phosphate and a 3'-hydroxyl group; requires a central core of homology in the junction. The consensus cleavage sequence is 5'-(A/T)TT(C/G)-3'. Cleavage occurs on the 3'-side of the TT dinucleotide at the point of strand exchange. HJ branch migration catalyzed by RuvA-RuvB allows RuvC to scan DNA until it finds its consensus sequence, where it cleaves and resolves the cruciform DNA. This Moorella thermoacetica (strain ATCC 39073 / JCM 9320) protein is Crossover junction endodeoxyribonuclease RuvC.